The sequence spans 307 residues: O-acetylserine dependent cystathionine beta-synthase (307 aa).

Lys44 is subject to N6-(pyridoxal phosphate)lysine. Pyridoxal 5'-phosphate contacts are provided by residues Asn74, Gly178–Thr182, and Ser265.

It belongs to the cysteine synthase/cystathionine beta-synthase family. The cofactor is pyridoxal 5'-phosphate.

The enzyme catalyses O-acetyl-L-serine + L-homocysteine = L,L-cystathionine + acetate + H(+). Catalyzes the conversion of O-acetylserine and homocysteine to cystathionine. The sequence is that of O-acetylserine dependent cystathionine beta-synthase (mccA) from Bacillus subtilis (strain 168).